We begin with the raw amino-acid sequence, 441 residues long: Ribosomal protein uS12 methylthiotransferase RimO (441 aa).

The 111-residue stretch at 8 to 118 (PKIGFVSLGC…VLQHVHHYVP (111 aa)) folds into the MTTase N-terminal domain. 6 residues coordinate [4Fe-4S] cluster: Cys17, Cys53, Cys82, Cys150, Cys154, and Cys157. In terms of domain architecture, Radical SAM core spans 136-373 (LTPRHYAYLK…MQLQQQISAE (238 aa)). The TRAM domain occupies 376–441 (QEKVGREILV…DEYDLWGSRV (66 aa)).

This sequence belongs to the methylthiotransferase family. RimO subfamily. The cofactor is [4Fe-4S] cluster.

It is found in the cytoplasm. The catalysed reaction is L-aspartate(89)-[ribosomal protein uS12]-hydrogen + (sulfur carrier)-SH + AH2 + 2 S-adenosyl-L-methionine = 3-methylsulfanyl-L-aspartate(89)-[ribosomal protein uS12]-hydrogen + (sulfur carrier)-H + 5'-deoxyadenosine + L-methionine + A + S-adenosyl-L-homocysteine + 2 H(+). Functionally, catalyzes the methylthiolation of an aspartic acid residue of ribosomal protein uS12. The sequence is that of Ribosomal protein uS12 methylthiotransferase RimO from Salmonella paratyphi B (strain ATCC BAA-1250 / SPB7).